We begin with the raw amino-acid sequence, 387 residues long: 1-deoxy-D-xylulose 5-phosphate reductoisomerase (387 aa).

Residues threonine 10, glycine 11, isoleucine 13, asparagine 38, and asparagine 122 each contribute to the NADPH site. Lysine 123 serves as a coordination point for 1-deoxy-D-xylulose 5-phosphate. Glutamate 124 lines the NADPH pocket. Aspartate 148 serves as a coordination point for Mn(2+). 1-deoxy-D-xylulose 5-phosphate contacts are provided by serine 149, glutamate 150, serine 174, and histidine 197. Glutamate 150 is a Mn(2+) binding site. Residue glycine 203 participates in NADPH binding. Positions 210, 215, 216, and 219 each coordinate 1-deoxy-D-xylulose 5-phosphate. Mn(2+) is bound at residue glutamate 219.

It belongs to the DXR family. The cofactor is Mg(2+). Requires Mn(2+) as cofactor.

The enzyme catalyses 2-C-methyl-D-erythritol 4-phosphate + NADP(+) = 1-deoxy-D-xylulose 5-phosphate + NADPH + H(+). It functions in the pathway isoprenoid biosynthesis; isopentenyl diphosphate biosynthesis via DXP pathway; isopentenyl diphosphate from 1-deoxy-D-xylulose 5-phosphate: step 1/6. Its function is as follows. Catalyzes the NADPH-dependent rearrangement and reduction of 1-deoxy-D-xylulose-5-phosphate (DXP) to 2-C-methyl-D-erythritol 4-phosphate (MEP). The sequence is that of 1-deoxy-D-xylulose 5-phosphate reductoisomerase from Ehrlichia canis (strain Jake).